A 285-amino-acid chain; its full sequence is 4-diphosphocytidyl-2-C-methyl-D-erythritol kinase (285 aa).

Residue K28 is part of the active site. Residue 109–119 (PVAAGLGGGSA) participates in ATP binding. The active site involves D148.

It belongs to the GHMP kinase family. IspE subfamily.

It carries out the reaction 4-CDP-2-C-methyl-D-erythritol + ATP = 4-CDP-2-C-methyl-D-erythritol 2-phosphate + ADP + H(+). It functions in the pathway isoprenoid biosynthesis; isopentenyl diphosphate biosynthesis via DXP pathway; isopentenyl diphosphate from 1-deoxy-D-xylulose 5-phosphate: step 3/6. Catalyzes the phosphorylation of the position 2 hydroxy group of 4-diphosphocytidyl-2C-methyl-D-erythritol. The chain is 4-diphosphocytidyl-2-C-methyl-D-erythritol kinase from Novosphingobium aromaticivorans (strain ATCC 700278 / DSM 12444 / CCUG 56034 / CIP 105152 / NBRC 16084 / F199).